The chain runs to 415 residues: Serine--tRNA ligase (415 aa).

231–233 contacts L-serine; that stretch reads TAE. 262–264 is an ATP binding site; sequence RSE. An L-serine-binding site is contributed by Glu-285. Position 349 to 352 (349 to 352) interacts with ATP; sequence EISS. Ser-383 provides a ligand contact to L-serine.

It belongs to the class-II aminoacyl-tRNA synthetase family. Type-1 seryl-tRNA synthetase subfamily. Homodimer. The tRNA molecule binds across the dimer.

It is found in the cytoplasm. The catalysed reaction is tRNA(Ser) + L-serine + ATP = L-seryl-tRNA(Ser) + AMP + diphosphate + H(+). It catalyses the reaction tRNA(Sec) + L-serine + ATP = L-seryl-tRNA(Sec) + AMP + diphosphate + H(+). It participates in aminoacyl-tRNA biosynthesis; selenocysteinyl-tRNA(Sec) biosynthesis; L-seryl-tRNA(Sec) from L-serine and tRNA(Sec): step 1/1. Catalyzes the attachment of serine to tRNA(Ser). Is also able to aminoacylate tRNA(Sec) with serine, to form the misacylated tRNA L-seryl-tRNA(Sec), which will be further converted into selenocysteinyl-tRNA(Sec). This chain is Serine--tRNA ligase, found in Helicobacter pylori (strain ATCC 700392 / 26695) (Campylobacter pylori).